The primary structure comprises 461 residues: Putative cytochrome P450 132 (461 aa).

Cysteine 409 is a heme binding site.

It belongs to the cytochrome P450 family. Heme is required as a cofactor.

The protein is Putative cytochrome P450 132 (cyp132) of Mycobacterium bovis (strain ATCC BAA-935 / AF2122/97).